Consider the following 175-residue polypeptide: ATP synthase subunit b (175 aa).

The helical transmembrane segment at 14–34 threads the bilayer; that stretch reads LSPNPGLIFWTTVSFVIVLLI.

Belongs to the ATPase B chain family. As to quaternary structure, F-type ATPases have 2 components, F(1) - the catalytic core - and F(0) - the membrane proton channel. F(1) has five subunits: alpha(3), beta(3), gamma(1), delta(1), epsilon(1). F(0) has four main subunits: a(1), b(2) and c(10-14). The alpha and beta chains form an alternating ring which encloses part of the gamma chain. F(1) is attached to F(0) by a central stalk formed by the gamma and epsilon chains, while a peripheral stalk is formed by the delta and b chains.

The protein localises to the cell inner membrane. In terms of biological role, f(1)F(0) ATP synthase produces ATP from ADP in the presence of a proton or sodium gradient. F-type ATPases consist of two structural domains, F(1) containing the extramembraneous catalytic core and F(0) containing the membrane proton channel, linked together by a central stalk and a peripheral stalk. During catalysis, ATP synthesis in the catalytic domain of F(1) is coupled via a rotary mechanism of the central stalk subunits to proton translocation. Its function is as follows. Component of the F(0) channel, it forms part of the peripheral stalk, linking F(1) to F(0). The polypeptide is ATP synthase subunit b (Chlorobium phaeobacteroides (strain DSM 266 / SMG 266 / 2430)).